The chain runs to 930 residues: MSKKLTTNEIRKLWLDFFKSKNHTEVESKSLIPKNDDSLLWINSGVATLKTFFSGKENPPSKRLTNSQRCLRTNDIENVGLTSRHHTFFEMLGNFSIGDYFRKEAIEFGAELVFKVFKLDPKKIYITVYEEDQESFDLWVKNGAIKSHILKCDKSRNFWEIGSGPCGPCTEIYYDRGEKYDFQKLGEKLFFEDIENDRYIEIWNIVFSEFNNDGKNNYTKLARQNIDTGAGLERLACILQDVPTNYDTDAFVNVRSVIEKYSNKKYDNNLYFESKKDSEKVFINKCFSVIIDHFKAVIFAISDGALPSNKDRGYILRKLLRRSFLYLNYLKVSFENSKEIINTIISNNETYYPYLKENLNNVINTIKLEYDLYCESINNSFKKLNELLNKKLLDASDLFNLVTTYGFPIEIVQSLQELLTQSKDAKNLKLAEDIINSINPSDKKISISKLKIEFDEFEKLFDEHRLIANANASVKGMENQNEELLNLPTLDSSFDYEIESVKNSKVLKIFDENWKPVEEIKNKDCWVILDKTCFFATTGGQEHDTGKINKFDVVDVIKSPQGYHLHKVVKGTFKIGEKVDGQINSFDRNIIRKQHSSEHLMHSALKRVVSPTIKQEGAFKSIEKITLDFSFNRKLTYKEILGVEKEVKRIIATKNPTQVLMKTLDEAKEMGAIGYFEQVYKKISGKLRVLYLCPESIEICGGTHVYNTGDIEDFMVTGLTSKGSGSWRIEAVSSNYLVDKFKNNVIKKAIDDFNNYFKKYKELNIKDDEVEKYKKTDINSIHYLELKEINEILKNKINTLVIRKEKENLSKESNEIKNKFTEVKESTKLFLLKDIDRKLLFNSLVLAINEAKSTVFLVINEVDGVIQYVLCSNESFAKNNNLDFNLYAKDLNAKLGGKGGGRSYLVQGTILKIDEKELNKILDTINAKLK.

Residues His-595, His-599, Cys-700, and His-704 each contribute to the Zn(2+) site.

The protein belongs to the class-II aminoacyl-tRNA synthetase family. Zn(2+) serves as cofactor.

It localises to the cytoplasm. The enzyme catalyses tRNA(Ala) + L-alanine + ATP = L-alanyl-tRNA(Ala) + AMP + diphosphate. Functionally, catalyzes the attachment of alanine to tRNA(Ala) in a two-step reaction: alanine is first activated by ATP to form Ala-AMP and then transferred to the acceptor end of tRNA(Ala). Also edits incorrectly charged Ser-tRNA(Ala) and Gly-tRNA(Ala) via its editing domain. The chain is Alanine--tRNA ligase from Malacoplasma penetrans (strain HF-2) (Mycoplasma penetrans).